We begin with the raw amino-acid sequence, 196 residues long: Holliday junction branch migration complex subunit RuvA (196 aa).

Residues 1–63 are domain I; that stretch reads MIASVRGEVI…EDSMTLYGFA (63 aa). The domain II stretch occupies residues 64-142; it reads DADARDLFGT…PVTTGAGVTA (79 aa). The flexible linker stretch occupies residues 143 to 151; the sequence is VGGHAVRGP. The tract at residues 151–196 is domain III; that stretch reads PVVEALVGLGFAAKQAEEACDKVLAADPDATTSSALRAALSMLGKK.

It belongs to the RuvA family. In terms of assembly, homotetramer. Forms an RuvA(8)-RuvB(12)-Holliday junction (HJ) complex. HJ DNA is sandwiched between 2 RuvA tetramers; dsDNA enters through RuvA and exits via RuvB. An RuvB hexamer assembles on each DNA strand where it exits the tetramer. Each RuvB hexamer is contacted by two RuvA subunits (via domain III) on 2 adjacent RuvB subunits; this complex drives branch migration. In the full resolvosome a probable DNA-RuvA(4)-RuvB(12)-RuvC(2) complex forms which resolves the HJ.

The protein localises to the cytoplasm. Its function is as follows. The RuvA-RuvB-RuvC complex processes Holliday junction (HJ) DNA during genetic recombination and DNA repair, while the RuvA-RuvB complex plays an important role in the rescue of blocked DNA replication forks via replication fork reversal (RFR). RuvA specifically binds to HJ cruciform DNA, conferring on it an open structure. The RuvB hexamer acts as an ATP-dependent pump, pulling dsDNA into and through the RuvAB complex. HJ branch migration allows RuvC to scan DNA until it finds its consensus sequence, where it cleaves and resolves the cruciform DNA. This Mycobacterium sp. (strain JLS) protein is Holliday junction branch migration complex subunit RuvA.